The following is a 704-amino-acid chain: Probable serine/threonine-protein kinase WNK1 (704 aa).

One can recognise a Protein kinase domain in the interval 27–284 (GRYNDVLGKG…ARELLKDPFL (258 aa)). Residues 107-110 (TEMF) and lysine 157 each bind ATP. The active-site Proton acceptor is the aspartate 174. Residues 499-521 (QTDLQDSGGSSDDGGGQTQHVKD) are disordered.

It belongs to the protein kinase superfamily. Ser/Thr protein kinase family. WNK subfamily.

The enzyme catalyses L-seryl-[protein] + ATP = O-phospho-L-seryl-[protein] + ADP + H(+). The catalysed reaction is L-threonyl-[protein] + ATP = O-phospho-L-threonyl-[protein] + ADP + H(+). This Oryza sativa subsp. japonica (Rice) protein is Probable serine/threonine-protein kinase WNK1 (WNK1).